The following is a 144-amino-acid chain: Peroxisome assembly protein 22 (144 aa).

A helical transmembrane segment spans residues 13–35 (YGAVSLASLLVAASIVAYRWWNA).

The protein belongs to the peroxin-22 family.

It localises to the peroxisome membrane. Its function is as follows. Involved in peroxisome biogenesis. The protein is Peroxisome assembly protein 22 (PEX22) of Eremothecium gossypii (strain ATCC 10895 / CBS 109.51 / FGSC 9923 / NRRL Y-1056) (Yeast).